Here is a 946-residue protein sequence, read N- to C-terminus: Zinc finger protein rotund (946 aa).

Disordered stretches follow at residues 10–30 (GPQL…GHSD) and 156–269 (FRKP…HNLN). The span at 161 to 176 (NNNGYSWSTGNNNEVV) shows a compositional bias: polar residues. Low complexity predominate over residues 177 to 188 (SHSSNGHTNNHP). 2 stretches are compositionally biased toward polar residues: residues 198–230 (ASAT…SIKS) and 242–269 (TCKS…HNLN). 6 C2H2-type zinc fingers span residues 488 to 510 (YQCK…TQIH), 517 to 539 (YKCT…TRIH), 545 to 567 (YRCE…IRTH), 573 to 597 (YKCR…SRCH), 603 to 625 (FKCN…IPKH), and 634 to 656 (HICQ…MQKH). Residues 683-853 (GGSANPANGP…TPSAVGPYDA (171 aa)) are disordered. Composition is skewed to low complexity over residues 739–762 (HQQQ…QQQQ) and 770–790 (HGVP…QQQQ). Polar residues predominate over residues 813-822 (TAPNGSQSNG). The segment covering 828 to 841 (QPHHRMPDPVREDI) has biased composition (basic and acidic residues).

It belongs to the krueppel C2H2-type zinc-finger protein family. In terms of assembly, interacts with nab; which acts as a corepressor. Isoform rn and isoform roe are expressed in non-overlapping domains in the larval imaginal disks. Isoform rn is first expressed during the early third larval instar in the leg, wing, haltere and antennal part of the eye-antennal imaginal disk. It is observed as a ring in the leg and antenna disks and in the presumptive wing pouch and capitellum of wing and haltere disks respectively. In wing disk it is expressed in 3 concentric domains in the wing pouch. In late third instar, expression of isoform rn in the leg disk is no longer evident, but is maintained in the other disks. Isoform roe appears in the third instar and is confined to the eye part of the eye-antennal imaginal disk in a band of 4-6 cells at the morphogenetic furrow. There is no evidence of roe expression in other imaginal disks.

Its subcellular location is the nucleus. Transcription factor involved in imaginal disks development. Isoform rn is required in the wings, antenna, haltere, proboscis and legs disks, while isoform roe is required in the eye disk. Together with nab corepressor, it is involved in the initiation and maintenance of wingless (wg) expression in the wing hinge, by limiting the expression of wg to this compartment. Also required for the epithelial-mesenchymal transition branch of basolateral junctions signaling. This is Zinc finger protein rotund from Drosophila melanogaster (Fruit fly).